Consider the following 316-residue polypeptide: UDP-N-acetylenolpyruvoylglucosamine reductase (316 aa).

Residues 27–225 (VGGKAERFYR…KTAINALLKK (199 aa)) enclose the FAD-binding PCMH-type domain. The active site involves arginine 190. Serine 239 functions as the Proton donor in the catalytic mechanism. Residue glutamate 309 is part of the active site.

It belongs to the MurB family. FAD serves as cofactor.

The protein resides in the cytoplasm. The enzyme catalyses UDP-N-acetyl-alpha-D-muramate + NADP(+) = UDP-N-acetyl-3-O-(1-carboxyvinyl)-alpha-D-glucosamine + NADPH + H(+). It functions in the pathway cell wall biogenesis; peptidoglycan biosynthesis. Its function is as follows. Cell wall formation. This is UDP-N-acetylenolpyruvoylglucosamine reductase from Coxiella burnetii (strain CbuK_Q154) (Coxiella burnetii (strain Q154)).